Reading from the N-terminus, the 224-residue chain is tRNA (guanine-N(7)-)-methyltransferase (224 aa).

The S-adenosyl-L-methionine site is built by glutamate 45, glutamate 70, aspartate 97, and aspartate 119. Aspartate 119 is a catalytic residue. Residues lysine 123, aspartate 155, and 199–202 (TEYE) contribute to the substrate site.

It belongs to the class I-like SAM-binding methyltransferase superfamily. TrmB family.

The enzyme catalyses guanosine(46) in tRNA + S-adenosyl-L-methionine = N(7)-methylguanosine(46) in tRNA + S-adenosyl-L-homocysteine. Its pathway is tRNA modification; N(7)-methylguanine-tRNA biosynthesis. In terms of biological role, catalyzes the formation of N(7)-methylguanine at position 46 (m7G46) in tRNA. The chain is tRNA (guanine-N(7)-)-methyltransferase from Ureaplasma urealyticum serovar 10 (strain ATCC 33699 / Western).